The primary structure comprises 473 residues: H(+)/Cl(-) exchange transporter ClcA (473 aa).

The Cytoplasmic portion of the chain corresponds to 1–32 (MKTDTSTFLAQQIVRLRRRDQIRRLMQRDKTP). The chain crosses the membrane as a helical span at residues 33–69 (LAILFMAAVVGTLTGLVGVAFEKAVSWVQNMRIGALV). Residues 70–76 (QVADHAF) lie on the Periplasmic side of the membrane. Residues 77-100 (LLWPLAFILSALLAMVGYFLVRKF) form a helical membrane-spanning segment. The short motif at 106–110 (GSGIP) is the Selectivity filter part_1 element. Residue S107 participates in chloride binding. An intramembrane region (helical) is located at residues 109 to 116 (IPEIEGAL). The Cytoplasmic segment spans residues 117–123 (EELRPVR). 2 helical membrane-spanning segments follow: residues 124 to 141 (WWRV…TLGA) and 148 to 166 (EGPT…LDVF). The Selectivity filter part_2 motif lies at 146–150 (GREGP). Residues 167 to 176 (RMRSAEARHT) are Cytoplasmic-facing. 2 intramembrane regions (helical) span residues 177-189 (LLAT…LSAA) and 193-201 (PLAGILFII). The Cytoplasmic segment spans residues 202-214 (EEMRPQFRYNLIS). The helical transmembrane segment at 215 to 232 (IKAVFTGVIMSSIVFRIF) threads the bilayer. Topologically, residues 233-252 (NGEAPIIEVGKLSDAPVNTL) are periplasmic. A helical membrane pass occupies residues 253–281 (WLYLILGIIFGCVGPVFNSLVLRTQDMFQ). At 282 to 287 (RFHGGE) the chain is on the cytoplasmic side. A helical transmembrane segment spans residues 288–309 (IKKWVLMGGAIGGLCGILGLIE). Topologically, residues 310 to 329 (PEAAGGGFNLIPIAAAGNFS) are periplasmic. The next 2 membrane-spanning stretches (helical) occupy residues 330 to 349 (VGLL…LCFS) and 355 to 376 (GIFA…MAAA). The short motif at 355–359 (GIFAP) is the Selectivity filter part_3 element. The chloride site is built by I356 and F357. Over 377 to 386 (VLFPQYHLEA) the chain is Periplasmic. The segment at residues 387 to 401 (GTFAIAGMGALMAAS) is an intramembrane region (helical). The segment at residues 402–404 (VRA) is an intramembrane region (note=Loop between two helices). Positions 405-416 (PLTGIVLVLEMT) form an intramembrane region, helical. An intramembrane region (note=Loop between two helices) is located at residues 417–421 (DNYQL). Residues 422 to 438 (ILPMIITCLGATLLAQF) form a helical membrane-spanning segment. The Cytoplasmic portion of the chain corresponds to 439–473 (LGGKPLYSTILARTLAKQDAEQAAKNQNAPAGENT). Chloride is bound at residue Y445.

It belongs to the chloride channel (TC 2.A.49) family. ClcA subfamily. In terms of assembly, homodimer.

It localises to the cell inner membrane. The enzyme catalyses 2 chloride(in) + H(+)(out) = 2 chloride(out) + H(+)(in). Functionally, proton-coupled chloride transporter. Functions as antiport system and exchanges two chloride ions for 1 proton. Probably acts as an electrical shunt for an outwardly-directed proton pump that is linked to amino acid decarboxylation, as part of the extreme acid resistance (XAR) response. This is H(+)/Cl(-) exchange transporter ClcA from Salmonella agona (strain SL483).